Consider the following 420-residue polypeptide: MKTLIARHKAGEHIGICSVCSAHPLVIEAALAFDRNSTRKVLIEATSNQVNQFGGYTGMTPADFREFVFTIADKVGFARERIILGGDHLGPNCWQQENADAAMEKSVELVKEYVRAGFSKIHLDASMSCAGDPIPLAPETVAERAAVLCFAAESVATDCQREQLSYVIGTEVPVPGGEASAIQSVHITHVEDTANTLRTHQKAFIARGLTEALTRVIAIVVQPGVEFDHSNIIHYQPQEAQPLAQWIENTRMVYEAHSTDYQTRTAYWELVRDHFAILKVGPALTFALREAIFALAQIEQELIAPENRSGCLAVIEEVMLDEPQYWKKYYRTGFNDSLLDIRYSLSDRIRYYWPHSRIKNSVETMMVNLEGVDIPLGMISQYLPKQFERIQSGELSAIPHQLIMDKIYDVLRAYRYGCAE.

It belongs to the GatZ/KbaZ family. GatZ subfamily. As to quaternary structure, forms a complex with GatY.

Its pathway is carbohydrate metabolism; D-tagatose 6-phosphate degradation; D-glyceraldehyde 3-phosphate and glycerone phosphate from D-tagatose 6-phosphate: step 2/2. Its function is as follows. Component of the tagatose-1,6-bisphosphate aldolase GatYZ that is required for full activity and stability of the Y subunit. Could have a chaperone-like function for the proper and stable folding of GatY. When expressed alone, GatZ does not show any aldolase activity. Is involved in the catabolism of galactitol. The chain is D-tagatose-1,6-bisphosphate aldolase subunit GatZ from Escherichia coli (strain SE11).